The chain runs to 224 residues: MSITQWPTSERPREKLLREDAHILSDAELIAVIIQKGVRGCNAVELAREWLNHLGGLASLLNADFHRLSGLRGLGKAVYCKLKAAAELQRRYLRQSLERKGQLGCTQDAQQLLYAQLRHHESEVFACLFLDNRHRIIQFEKLFYGSINQASVHPREIIKRALYHNSAALIVAHNHPSGVPDPSQADRAATTHLKEALALIDVRLLDHIIIGDRNSFSFAESGLL.

The 123-residue stretch at 102–224 folds into the MPN domain; sequence QLGCTQDAQQ…SFSFAESGLL (123 aa). Zn(2+) contacts are provided by His-173, His-175, and Asp-186. Positions 173–186 match the JAMM motif motif; it reads HNHPSGVPDPSQAD.

It belongs to the UPF0758 family.

In Coxiella burnetii (strain Dugway 5J108-111), this protein is UPF0758 protein CBUD_1789.